The sequence spans 467 residues: Siroheme synthase (467 aa).

The segment at 1–203 (METLPIFMKL…GQEEAARHAM (203 aa)) is precorrin-2 dehydrogenase /sirohydrochlorin ferrochelatase. Residues 22 to 23 (EI) and 43 to 44 (PE) each bind NAD(+). A Phosphoserine modification is found at Ser-128. The uroporphyrinogen-III C-methyltransferase stretch occupies residues 216-467 (GEVYLVGGGP…APSPEVVSAG (252 aa)). An S-adenosyl-L-methionine-binding site is contributed by Pro-225. Residue Asp-248 is the Proton acceptor of the active site. Lys-270 serves as the catalytic Proton donor. S-adenosyl-L-methionine-binding positions include 301–303 (GGD), Ile-306, 331–332 (TA), Met-383, and Gly-412.

In the N-terminal section; belongs to the precorrin-2 dehydrogenase / sirohydrochlorin ferrochelatase family. It in the C-terminal section; belongs to the precorrin methyltransferase family.

The catalysed reaction is uroporphyrinogen III + 2 S-adenosyl-L-methionine = precorrin-2 + 2 S-adenosyl-L-homocysteine + H(+). The enzyme catalyses precorrin-2 + NAD(+) = sirohydrochlorin + NADH + 2 H(+). It catalyses the reaction siroheme + 2 H(+) = sirohydrochlorin + Fe(2+). It functions in the pathway cofactor biosynthesis; adenosylcobalamin biosynthesis; precorrin-2 from uroporphyrinogen III: step 1/1. The protein operates within cofactor biosynthesis; adenosylcobalamin biosynthesis; sirohydrochlorin from precorrin-2: step 1/1. It participates in porphyrin-containing compound metabolism; siroheme biosynthesis; precorrin-2 from uroporphyrinogen III: step 1/1. Its pathway is porphyrin-containing compound metabolism; siroheme biosynthesis; siroheme from sirohydrochlorin: step 1/1. It functions in the pathway porphyrin-containing compound metabolism; siroheme biosynthesis; sirohydrochlorin from precorrin-2: step 1/1. In terms of biological role, multifunctional enzyme that catalyzes the SAM-dependent methylations of uroporphyrinogen III at position C-2 and C-7 to form precorrin-2 via precorrin-1. Then it catalyzes the NAD-dependent ring dehydrogenation of precorrin-2 to yield sirohydrochlorin. Finally, it catalyzes the ferrochelation of sirohydrochlorin to yield siroheme. The polypeptide is Siroheme synthase (Methylobacillus flagellatus (strain ATCC 51484 / DSM 6875 / VKM B-1610 / KT)).